The primary structure comprises 130 residues: Small ribosomal subunit protein uS8 (130 aa).

Belongs to the universal ribosomal protein uS8 family. In terms of assembly, part of the 30S ribosomal subunit. Contacts proteins S5 and S12.

In terms of biological role, one of the primary rRNA binding proteins, it binds directly to 16S rRNA central domain where it helps coordinate assembly of the platform of the 30S subunit. This Buchnera aphidicola subsp. Acyrthosiphon kondoi (Acyrthosiphon kondoi symbiotic bacterium) protein is Small ribosomal subunit protein uS8.